The chain runs to 182 residues: Sperm acrosome-associated protein 7 (182 aa).

An N-terminal signal peptide occupies residues 1 to 24 (MAANRGSRTFLSVFLLCCWQGAEL). N-linked (GlcNAc...) asparagine glycosylation is present at asparagine 40. Basic and acidic residues predominate over residues 112-140 (LPTKEESGKNDRSTVANLHDHSSQTKHEP). Residues 112 to 154 (LPTKEESGKNDRSTVANLHDHSSQTKHEPPSSPEGKGSSNDDV) are disordered.

In terms of tissue distribution, testis-specific. Expressed in zygotene and pachytene spermatocytes, round spermatids, elongating spermatids and spermatozoa (at protein level). Testis-specific.

It localises to the secreted. Its subcellular location is the cytoplasmic vesicle. The protein resides in the secretory vesicle. It is found in the acrosome lumen. Functionally, involved in fertilization. Seems not to play a direct role in sperm-egg binding or gamete fusion. The sequence is that of Sperm acrosome-associated protein 7 from Mus musculus (Mouse).